A 352-amino-acid polypeptide reads, in one-letter code: UDP-N-acetylglucosamine--N-acetylmuramyl-(pentapeptide) pyrophosphoryl-undecaprenol N-acetylglucosamine transferase (352 aa).

UDP-N-acetyl-alpha-D-glucosamine contacts are provided by residues 12–14 (TGG), asparagine 124, arginine 160, serine 188, and glutamine 287.

Belongs to the glycosyltransferase 28 family. MurG subfamily.

Its subcellular location is the cell inner membrane. The enzyme catalyses di-trans,octa-cis-undecaprenyl diphospho-N-acetyl-alpha-D-muramoyl-L-alanyl-D-glutamyl-meso-2,6-diaminopimeloyl-D-alanyl-D-alanine + UDP-N-acetyl-alpha-D-glucosamine = di-trans,octa-cis-undecaprenyl diphospho-[N-acetyl-alpha-D-glucosaminyl-(1-&gt;4)]-N-acetyl-alpha-D-muramoyl-L-alanyl-D-glutamyl-meso-2,6-diaminopimeloyl-D-alanyl-D-alanine + UDP + H(+). It participates in cell wall biogenesis; peptidoglycan biosynthesis. Its function is as follows. Cell wall formation. Catalyzes the transfer of a GlcNAc subunit on undecaprenyl-pyrophosphoryl-MurNAc-pentapeptide (lipid intermediate I) to form undecaprenyl-pyrophosphoryl-MurNAc-(pentapeptide)GlcNAc (lipid intermediate II). This chain is UDP-N-acetylglucosamine--N-acetylmuramyl-(pentapeptide) pyrophosphoryl-undecaprenol N-acetylglucosamine transferase, found in Dechloromonas aromatica (strain RCB).